A 109-amino-acid polypeptide reads, in one-letter code: Phycoerythrin alpha-2 subunit (109 aa).

Residues Asp-52, Ser-53, Glu-63, Arg-64, Cys-67, Thr-72, Lys-74, Ala-75, and Lys-84 each contribute to the (2R,3E)-phycoerythrobilin site.

It belongs to the phycoerythrin family. As to quaternary structure, heterotetramer of 2 different alpha chains and 2 identical beta chains which form 2 alpha-beta heterodimers within the heterotetramer. The two alpha-beta heterodimers are rotated to an open configuration in contrast to the closed configuration found in other cryptophyte species due to the insertion of a single amino acid, Asp-65, in a conserved region of the alpha chain. In the open form, the central chromophores are not in physical contact but are separated by a water-filled channel. Post-translationally, contains three phycoerythrobilin chromophores with binding mediated by both the alpha and beta subunits.

The protein resides in the plastid. It localises to the chloroplast thylakoid membrane. Its function is as follows. Light-harvesting photosynthetic tetrapyrrole chromophore-protein from the phycobiliprotein complex. This is Phycoerythrin alpha-2 subunit from Hemiselmis andersenii (Cryptophyte alga).